Reading from the N-terminus, the 416-residue chain is Zinc finger protein 92 homolog (416 aa).

Residues 14 to 85 form the KRAB domain; that stretch reads VSFEDVSVYF…DIPRTWATAG (72 aa). A disordered region spans residues 86 to 125; that stretch reads LHIGDRTQSKTSTSTQKHSGRQLPGADPQGGKEGQAARSS. 8 consecutive C2H2-type zinc fingers follow at residues 152-174, 180-202, 208-230, 236-258, 264-286, 292-314, 320-342, and 348-370; these read YLCQQCGKAFSRSSNLIKHRIIH, YACPECGKLFRRSFALLEHQRIH, YACPECSKTFTRSSNLIKHQVIH, FACGDCGKLFRRSFALLEHARVH, YACPECGKAFSRSSNLIEHQRTH, YACGQCAKAFKGVSQLIHHQRSH, FACRECGKAFRGRSGLSQHRRVH, and YECSDCGKAFGRRANLFKHQAVH. Residues 368–416 are disordered; it reads AVHGARRPAKAETARRLAGPGSTGPGSAVAATSPPRPSTAARPSRPSRR. Over residues 394–416 the composition is skewed to low complexity; that stretch reads SAVAATSPPRPSTAARPSRPSRR.

This sequence belongs to the krueppel C2H2-type zinc-finger protein family.

It localises to the nucleus. Functionally, KRAB domain-containing zinc-finger protein that represses B1/Alu SINE transposable elements and modulates the transcription of nearby genes in a tissue-specific manner. It regulates glucose homeostasis and lipid metabolism by modulating the expression of the endocrine cell-defining transcription factor, MAFB, in pancreatic islets and, the fat metabolism regulator, ACACB, in adipose tissue and muscle. The polypeptide is Zinc finger protein 92 homolog (ZFP92) (Homo sapiens (Human)).